We begin with the raw amino-acid sequence, 273 residues long: 2-dehydro-3-deoxyphosphooctonate aldolase (273 aa).

Belongs to the KdsA family.

Its subcellular location is the cytoplasm. It carries out the reaction D-arabinose 5-phosphate + phosphoenolpyruvate + H2O = 3-deoxy-alpha-D-manno-2-octulosonate-8-phosphate + phosphate. It participates in carbohydrate biosynthesis; 3-deoxy-D-manno-octulosonate biosynthesis; 3-deoxy-D-manno-octulosonate from D-ribulose 5-phosphate: step 2/3. The protein operates within bacterial outer membrane biogenesis; lipopolysaccharide biosynthesis. This Nitratidesulfovibrio vulgaris (strain ATCC 29579 / DSM 644 / CCUG 34227 / NCIMB 8303 / VKM B-1760 / Hildenborough) (Desulfovibrio vulgaris) protein is 2-dehydro-3-deoxyphosphooctonate aldolase.